The chain runs to 830 residues: uncharacterized protein (830 aa).

Disordered regions lie at residues 1–28 (MGVQLKLDPNSKNWLRQPDQQPIQDSIC), 70–147 (RRAN…GNFA), and 186–210 (AASPTVSFSPASTSENLTPTSSKSL). Residues 10-27 (NSKNWLRQPDQQPIQDSI) show a composition bias toward polar residues. 2 stretches are compositionally biased toward low complexity: residues 100–130 (QKSSNSRKSIRSQSRSRSSSVGSDSQASIQS) and 186–199 (AASPTVSFSPASTS). Residues 200-210 (ENLTPTSSKSL) are compositionally biased toward polar residues. 10 helical membrane passes run 505–525 (WLVAFMHGVASASILPVVYGG), 529–549 (DMLIGFVLGLLLGIFRVYINP), 551–571 (FFLFDSLFEVIISIILSFLGR), 584–604 (FCFAALVEGAITLILPGYVVF), 622–642 (MLYAVIFSLFLSFGITIGSAL), 659–679 (IIAVSPYWYILLIPIFTLSLL), 691–711 (IQMFVACCGYVVYYFSSLHFG), 715–735 (ISSAIGSFAVGCLGNMYSHFI), 740–760 (FAVVLPAIFVLVPSGFAAQGG), and 802–822 (IAIGIAIGFLASSLTVYPFFG).

Belongs to the ThrE exporter (TC 2.A.79) family.

It is found in the cell membrane. It localises to the cell tip. This is an uncharacterized protein from Schizosaccharomyces pombe (strain 972 / ATCC 24843) (Fission yeast).